The following is a 65-amino-acid chain: Large ribosomal subunit protein bL35 (65 aa).

It belongs to the bacterial ribosomal protein bL35 family.

In Phytoplasma mali (strain AT), this protein is Large ribosomal subunit protein bL35.